The following is a 93-amino-acid chain: CRISPR-associated endoribonuclease Cas2 1 (93 aa).

D8 serves as a coordination point for Mg(2+).

It belongs to the CRISPR-associated endoribonuclease Cas2 protein family. Homodimer, forms a heterotetramer with a Cas1 homodimer. The cofactor is Mg(2+).

Functionally, CRISPR (clustered regularly interspaced short palindromic repeat), is an adaptive immune system that provides protection against mobile genetic elements (viruses, transposable elements and conjugative plasmids). CRISPR clusters contain sequences complementary to antecedent mobile elements and target invading nucleic acids. CRISPR clusters are transcribed and processed into CRISPR RNA (crRNA). Functions as a ssRNA-specific endoribonuclease. Involved in the integration of spacer DNA into the CRISPR cassette. This chain is CRISPR-associated endoribonuclease Cas2 1, found in Chloroflexus aurantiacus (strain ATCC 29366 / DSM 635 / J-10-fl).